The chain runs to 201 residues: Small ribosomal subunit protein uS4c (201 aa).

Residues 20–44 (GLTSKRPKAGSDLRNQSRSGKKSQY) are disordered. Residues 89-152 (MRLDNILFRL…NSRTLVQNLL (64 aa)) form the S4 RNA-binding domain.

This sequence belongs to the universal ribosomal protein uS4 family. As to quaternary structure, part of the 30S ribosomal subunit. Contacts protein S5. The interaction surface between S4 and S5 is involved in control of translational fidelity.

The protein localises to the plastid. The protein resides in the chloroplast. Functionally, one of the primary rRNA binding proteins, it binds directly to 16S rRNA where it nucleates assembly of the body of the 30S subunit. Its function is as follows. With S5 and S12 plays an important role in translational accuracy. In Barbarea verna (Land cress), this protein is Small ribosomal subunit protein uS4c (rps4).